The sequence spans 798 residues: ATP-dependent RNA helicase bel (798 aa).

A disordered region spans residues 16 to 248 (VAGLDLNGGS…SRWKEGGGSN (233 aa)). Positions 31–42 (PITSKTSTNSVT) are enriched in polar residues. Composition is skewed to gly residues over residues 94-110 (RGGGGEYRRGGGGGGRG), 118-132 (YGYGSGGGGRRGGGG), and 154-178 (SGGGGGGGRGFGRGPSYRGGGGGSG). Phosphoserine is present on residues Ser177 and Ser179. Over residues 198-209 (RNDRWQEPERPA) the composition is skewed to basic and acidic residues. A phosphoserine mark is found at Ser214 and Ser219. The short motif at 295 to 323 (TSFDDVQLTEIIRNNVALARYDKPTPVQK) is the Q motif element. ATP is bound by residues 315–322 (YDKPTPVQ) and 339–346 (AQTGSGKT). In terms of domain architecture, Helicase ATP-binding spans 326–515 (IPIIINGRDL…SDFLSNYIFL (190 aa)). The short motif at 459–462 (DEAD) is the DEAD box element. Positions 542 to 693 (YLLDLLSSIR…EIPSFMEDMS (152 aa)) constitute a Helicase C-terminal domain. Ser638 bears the Phosphoserine mark. 2 disordered regions span residues 689 to 765 (MEDM…SGGG) and 778 to 798 (GGSYGGGSASHSSNAPDWWAQ). Composition is skewed to gly residues over residues 706 to 717 (RGGGGRYGGGFG) and 740 to 750 (GGSGSGGGGGS).

It belongs to the DEAD box helicase family. DDX3/DED1 subfamily. In terms of tissue distribution, vas and bel colocalize in nuage (perinuclear, electron-dense granules in germline cells) and at the oocyte posterior during oogenesis.

It is found in the cytoplasm. The catalysed reaction is ATP + H2O = ADP + phosphate + H(+). Functionally, ATP-dependent RNA helicase that is essential and required for cellular function, larval growth, and for male and female fertility. Also required for RNA interference (RNAi), double-stranded RNA induces potent and specific gene silencing, by acting downstream of dsRNA internalization. RNAi is mediated by the RNA-induced silencing complex (RISC), a sequence-specific, multicomponent nuclease that destroys or silences messenger RNAs homologous to the silencing trigger. The sequence is that of ATP-dependent RNA helicase bel from Drosophila melanogaster (Fruit fly).